Here is a 467-residue protein sequence, read N- to C-terminus: 3-isopropylmalate dehydratase large subunit (467 aa).

Positions 348, 409, and 412 each coordinate [4Fe-4S] cluster.

The protein belongs to the aconitase/IPM isomerase family. LeuC type 1 subfamily. As to quaternary structure, heterodimer of LeuC and LeuD. The cofactor is [4Fe-4S] cluster.

The enzyme catalyses (2R,3S)-3-isopropylmalate = (2S)-2-isopropylmalate. It functions in the pathway amino-acid biosynthesis; L-leucine biosynthesis; L-leucine from 3-methyl-2-oxobutanoate: step 2/4. Functionally, catalyzes the isomerization between 2-isopropylmalate and 3-isopropylmalate, via the formation of 2-isopropylmaleate. This Thiobacillus denitrificans (strain ATCC 25259 / T1) protein is 3-isopropylmalate dehydratase large subunit.